Here is a 445-residue protein sequence, read N- to C-terminus: MTFQNKKILVAGLGGTGISMIAYLRKNGAEVAAYDAELKPERVSQIGKMFDGLVFYTGRLKDALSNGFDILALSPGISERQPDIEAFKRNGGRVLGDIELLADIVNRRGDKVIAITGSNGKTTVTSLVGYLCIKCGLDTVIAGNIGAPVLEAELQREGKKADVWVLELSSFQLENTESLRPTAATVLNISEDHLDRYDDLLDYAHTKAKIFRGDGVQVLNADDAFCRAMKRAGREVKWFSLEYEADFWLERETGRLKQGNEDLIATQDIPLQGLHNATNVMAAVALCEAVGLPREALLEHVKTFQGLPHRVEKIGEKNGVVFIDDSKGTNVGATAAAIAGLQNPLFVILGGMGKGQDFTPLRDALAGKAKGVFLIGVDAPQIRRDLDGCDLNMTDCATLEEAVQKAYAQAEAGDIVLLSPACASFDMFKGYAHRSEVFIGAFKAL.

Gly-117–Thr-123 contributes to the ATP binding site.

Belongs to the MurCDEF family.

It is found in the cytoplasm. The enzyme catalyses UDP-N-acetyl-alpha-D-muramoyl-L-alanine + D-glutamate + ATP = UDP-N-acetyl-alpha-D-muramoyl-L-alanyl-D-glutamate + ADP + phosphate + H(+). It functions in the pathway cell wall biogenesis; peptidoglycan biosynthesis. Its function is as follows. Cell wall formation. Catalyzes the addition of glutamate to the nucleotide precursor UDP-N-acetylmuramoyl-L-alanine (UMA). The protein is UDP-N-acetylmuramoylalanine--D-glutamate ligase of Neisseria meningitidis serogroup A / serotype 4A (strain DSM 15465 / Z2491).